Consider the following 166-residue polypeptide: Endoribonuclease YbeY (166 aa).

Zn(2+) contacts are provided by His129, His133, and His139.

The protein belongs to the endoribonuclease YbeY family. Zn(2+) serves as cofactor.

Its subcellular location is the cytoplasm. In terms of biological role, single strand-specific metallo-endoribonuclease involved in late-stage 70S ribosome quality control and in maturation of the 3' terminus of the 16S rRNA. In Mesorhizobium japonicum (strain LMG 29417 / CECT 9101 / MAFF 303099) (Mesorhizobium loti (strain MAFF 303099)), this protein is Endoribonuclease YbeY.